The chain runs to 1377 residues: Protein RhsA (1377 aa).

28 repeat units span residues Gly-330–Thr-352, Gly-353–Ala-374, Gly-375–Asp-417, Gly-418–Ala-438, Gly-439–Asp-460, Gly-461–Asp-481, Gly-482–Asp-502, Gly-503–Thr-525, Gly-526–Ser-546, Gly-547–Glu-567, Gly-568–Gln-588, Gly-589–Asp-609, Gly-610–Gly-629, Gly-630–Asn-650, Gly-651–Asp-671, Gly-672–Glu-691, Gly-692–Lys-711, Gly-712–Glu-734, Gly-735–His-758, Gly-808–Phe-828, Gly-829–Ser-850, Leu-851–Pro-871, Arg-872–Asn-894, Leu-895–Ala-930, Arg-931–Thr-959, Asp-960–Glu-984, Glu-985–Ser-1019, and Gly-1162–Gln-1186. The tract at residues Gly-330–Gln-1186 is 28 X approximate tandem repeats. Residues Asp-1356 to Arg-1377 are disordered.

Belongs to the RHS family.

Rhs elements have a nonessential function. They may play an important role in the natural ecology of the cell. The sequence is that of Protein RhsA (rhsA) from Escherichia coli (strain K12).